Here is a 32-residue protein sequence, read N- to C-terminus: MSQISTKHRTVLFRRWMAIICCLIINIAYLVY.

The chain is Yop proteins translocation protein A (yscA) from Yersinia pestis.